The chain runs to 180 residues: Peptidyl-tRNA hydrolase (180 aa).

Tyr-13 is a tRNA binding site. Catalysis depends on His-18, which acts as the Proton acceptor. Residues Tyr-58, Asn-60, and Asn-100 each coordinate tRNA.

The protein belongs to the PTH family. As to quaternary structure, monomer.

The protein localises to the cytoplasm. It catalyses the reaction an N-acyl-L-alpha-aminoacyl-tRNA + H2O = an N-acyl-L-amino acid + a tRNA + H(+). In terms of biological role, hydrolyzes ribosome-free peptidyl-tRNAs (with 1 or more amino acids incorporated), which drop off the ribosome during protein synthesis, or as a result of ribosome stalling. Its function is as follows. Catalyzes the release of premature peptidyl moieties from peptidyl-tRNA molecules trapped in stalled 50S ribosomal subunits, and thus maintains levels of free tRNAs and 50S ribosomes. The polypeptide is Peptidyl-tRNA hydrolase (Fervidobacterium nodosum (strain ATCC 35602 / DSM 5306 / Rt17-B1)).